The following is a 236-amino-acid chain: uncharacterized protein (236 aa).

An N-terminal signal peptide occupies residues 1–22; the sequence is MEFKMQKIILGMLVVTASNAMA.

This is an uncharacterized protein from Pasteurella multocida (strain Pm70).